Here is a 390-residue protein sequence, read N- to C-terminus: Peroxisomal sarcosine oxidase (390 aa).

9–39 contacts FAD; it reads DAIVIGAGIQGCFTAYHLAKHRKRILLLEQF. At lysine 126 the chain carries N6-acetyllysine. At cysteine 319 the chain carries S-8alpha-FAD cysteine. The Microbody targeting signal signature appears at 388–390; sequence AHL.

The protein belongs to the MSOX/MTOX family. Requires FAD as cofactor. As to expression, expressed in the liver and kidney.

Its subcellular location is the peroxisome. It catalyses the reaction sarcosine + O2 + H2O = formaldehyde + glycine + H2O2. The catalysed reaction is L-pipecolate + O2 = L-1-piperideine-6-carboxylate + H2O2 + H(+). Metabolizes sarcosine and L-pipecolic acid. This chain is Peroxisomal sarcosine oxidase (PIPOX), found in Homo sapiens (Human).